The chain runs to 454 residues: Glutamyl-tRNA reductase (454 aa).

Substrate contacts are provided by residues 49–52 (TCNR), Ser109, 114–116 (ETQ), and Gln120. Cys50 functions as the Nucleophile in the catalytic mechanism. 189-194 (GAGKMS) serves as a coordination point for NADP(+). The span at 432-442 (DHAEQSWKEGQ) shows a compositional bias: basic and acidic residues. The segment at 432–454 (DHAEQSWKEGQRPSLNQGMALRT) is disordered.

This sequence belongs to the glutamyl-tRNA reductase family. As to quaternary structure, homodimer.

The catalysed reaction is (S)-4-amino-5-oxopentanoate + tRNA(Glu) + NADP(+) = L-glutamyl-tRNA(Glu) + NADPH + H(+). The protein operates within porphyrin-containing compound metabolism; protoporphyrin-IX biosynthesis; 5-aminolevulinate from L-glutamyl-tRNA(Glu): step 1/2. Functionally, catalyzes the NADPH-dependent reduction of glutamyl-tRNA(Glu) to glutamate 1-semialdehyde (GSA). This Shouchella clausii (strain KSM-K16) (Alkalihalobacillus clausii) protein is Glutamyl-tRNA reductase.